The chain runs to 127 residues: UPF0102 protein NFA_41430 (127 aa).

The protein belongs to the UPF0102 family.

The polypeptide is UPF0102 protein NFA_41430 (Nocardia farcinica (strain IFM 10152)).